Here is a 561-residue protein sequence, read N- to C-terminus: Dihydroxy-acid dehydratase (561 aa).

A [2Fe-2S] cluster-binding site is contributed by cysteine 50. Aspartate 82 is a binding site for Mg(2+). Position 123 (cysteine 123) interacts with [2Fe-2S] cluster. Residues aspartate 124 and lysine 125 each contribute to the Mg(2+) site. At lysine 125 the chain carries N6-carboxylysine. [2Fe-2S] cluster is bound at residue cysteine 195. A Mg(2+)-binding site is contributed by glutamate 447. Serine 473 functions as the Proton acceptor in the catalytic mechanism.

It belongs to the IlvD/Edd family. In terms of assembly, homodimer. [2Fe-2S] cluster is required as a cofactor. It depends on Mg(2+) as a cofactor.

The catalysed reaction is (2R)-2,3-dihydroxy-3-methylbutanoate = 3-methyl-2-oxobutanoate + H2O. It carries out the reaction (2R,3R)-2,3-dihydroxy-3-methylpentanoate = (S)-3-methyl-2-oxopentanoate + H2O. It functions in the pathway amino-acid biosynthesis; L-isoleucine biosynthesis; L-isoleucine from 2-oxobutanoate: step 3/4. Its pathway is amino-acid biosynthesis; L-valine biosynthesis; L-valine from pyruvate: step 3/4. Functions in the biosynthesis of branched-chain amino acids. Catalyzes the dehydration of (2R,3R)-2,3-dihydroxy-3-methylpentanoate (2,3-dihydroxy-3-methylvalerate) into 2-oxo-3-methylpentanoate (2-oxo-3-methylvalerate) and of (2R)-2,3-dihydroxy-3-methylbutanoate (2,3-dihydroxyisovalerate) into 2-oxo-3-methylbutanoate (2-oxoisovalerate), the penultimate precursor to L-isoleucine and L-valine, respectively. The protein is Dihydroxy-acid dehydratase of Synechocystis sp. (strain ATCC 27184 / PCC 6803 / Kazusa).